A 941-amino-acid chain; its full sequence is Glycine dehydrogenase (decarboxylating) (941 aa).

K692 is modified (N6-(pyridoxal phosphate)lysine).

This sequence belongs to the GcvP family. The glycine cleavage system is composed of four proteins: P, T, L and H. Pyridoxal 5'-phosphate is required as a cofactor.

The enzyme catalyses N(6)-[(R)-lipoyl]-L-lysyl-[glycine-cleavage complex H protein] + glycine + H(+) = N(6)-[(R)-S(8)-aminomethyldihydrolipoyl]-L-lysyl-[glycine-cleavage complex H protein] + CO2. The glycine cleavage system catalyzes the degradation of glycine. The P protein binds the alpha-amino group of glycine through its pyridoxal phosphate cofactor; CO(2) is released and the remaining methylamine moiety is then transferred to the lipoamide cofactor of the H protein. The polypeptide is Glycine dehydrogenase (decarboxylating) (Mycobacterium tuberculosis (strain ATCC 25177 / H37Ra)).